Reading from the N-terminus, the 164-residue chain is DNA-directed RNA polymerase 19 kDa subunit (164 aa).

Residues 1–35 (MADTDDIIDYESDDLTEYEDDDEEEEDGESLETSD) show a composition bias toward acidic residues. Positions 1–39 (MADTDDIIDYESDDLTEYEDDDEEEEDGESLETSDIDPK) are disordered.

The protein belongs to the poxviridae DNA-directed RNA polymerase 19 kDa subunit family. As to quaternary structure, the DNA-dependent RNA polymerase used for intermediate and late genes expression consists of eight subunits Rpo30/OPG66, Rpo7/OPG90, Rpo22/OPG103, Rpo147/OPG105, Rpo18/OPG119, Rpo19/OPG131, Rpo132/OPG151 and Rpo35/OPG156. The same holoenzyme, with the addition of the transcription-specificity factor OPG109, is used for early gene expression.

Its subcellular location is the virion. It carries out the reaction RNA(n) + a ribonucleoside 5'-triphosphate = RNA(n+1) + diphosphate. In terms of biological role, part of the DNA-dependent RNA polymerase which catalyzes the transcription of viral DNA into RNA using the four ribonucleoside triphosphates as substrates. Responsible for the transcription of early, intermediate and late genes. DNA-dependent RNA polymerase associates with the early transcription factor (ETF), itself composed of OPG118 and OPG133, thereby allowing the early genes transcription. Late transcription, and probably also intermediate transcription, require newly synthesized RNA polymerase. The protein is DNA-directed RNA polymerase 19 kDa subunit (OPG131) of Variola virus (isolate Human/India/Ind3/1967) (VARV).